The chain runs to 163 residues: Lipoprotein signal peptidase (163 aa).

Helical transmembrane passes span 3-23 (IPLIYNRILILFFFIANIIIL), 70-90 (NYILCLISSIAILIILKTMYN), and 94-114 (IENFFYNIPSAFIISGAIGNF). Residues Asp-125 and Asp-143 contribute to the active site. Residues 134 to 154 (WHFATFNIADVSIFIGSVLFI) traverse the membrane as a helical segment.

This sequence belongs to the peptidase A8 family.

Its subcellular location is the cell membrane. The catalysed reaction is Release of signal peptides from bacterial membrane prolipoproteins. Hydrolyzes -Xaa-Yaa-Zaa-|-(S,diacylglyceryl)Cys-, in which Xaa is hydrophobic (preferably Leu), and Yaa (Ala or Ser) and Zaa (Gly or Ala) have small, neutral side chains.. It functions in the pathway protein modification; lipoprotein biosynthesis (signal peptide cleavage). This protein specifically catalyzes the removal of signal peptides from prolipoproteins. This Buchnera aphidicola subsp. Baizongia pistaciae (strain Bp) protein is Lipoprotein signal peptidase.